Reading from the N-terminus, the 420-residue chain is Histidine--tRNA ligase (420 aa).

The protein belongs to the class-II aminoacyl-tRNA synthetase family. In terms of assembly, homodimer.

It localises to the cytoplasm. The catalysed reaction is tRNA(His) + L-histidine + ATP = L-histidyl-tRNA(His) + AMP + diphosphate + H(+). The protein is Histidine--tRNA ligase of Ureaplasma parvum serovar 3 (strain ATCC 27815 / 27 / NCTC 11736).